The following is a 153-amino-acid chain: uncharacterized protein (153 aa).

This is an uncharacterized protein from Alkalihalophilus pseudofirmus (strain ATCC BAA-2126 / JCM 17055 / OF4) (Bacillus pseudofirmus).